The chain runs to 788 residues: Endonuclease MutS2 (788 aa).

334 to 341 (GPNTGGKT) provides a ligand contact to ATP. The region spanning 713-788 (LDLRGQRYEE…GTGATIVYLQ (76 aa)) is the Smr domain.

It belongs to the DNA mismatch repair MutS family. MutS2 subfamily. Homodimer. Binds to stalled ribosomes, contacting rRNA.

Its function is as follows. Endonuclease that is involved in the suppression of homologous recombination and thus may have a key role in the control of bacterial genetic diversity. In terms of biological role, acts as a ribosome collision sensor, splitting the ribosome into its 2 subunits. Detects stalled/collided 70S ribosomes which it binds and splits by an ATP-hydrolysis driven conformational change. Acts upstream of the ribosome quality control system (RQC), a ribosome-associated complex that mediates the extraction of incompletely synthesized nascent chains from stalled ribosomes and their subsequent degradation. Probably generates substrates for RQC. In Lactobacillus johnsonii (strain CNCM I-12250 / La1 / NCC 533), this protein is Endonuclease MutS2.